Consider the following 280-residue polypeptide: Ribosomal RNA small subunit methyltransferase A (280 aa).

Positions 30, 32, 57, 78, 108, and 125 each coordinate S-adenosyl-L-methionine.

Belongs to the class I-like SAM-binding methyltransferase superfamily. rRNA adenine N(6)-methyltransferase family. RsmA subfamily.

It is found in the cytoplasm. The catalysed reaction is adenosine(1518)/adenosine(1519) in 16S rRNA + 4 S-adenosyl-L-methionine = N(6)-dimethyladenosine(1518)/N(6)-dimethyladenosine(1519) in 16S rRNA + 4 S-adenosyl-L-homocysteine + 4 H(+). Its function is as follows. Specifically dimethylates two adjacent adenosines (A1518 and A1519) in the loop of a conserved hairpin near the 3'-end of 16S rRNA in the 30S particle. May play a critical role in biogenesis of 30S subunits. This is Ribosomal RNA small subunit methyltransferase A from Leifsonia xyli subsp. xyli (strain CTCB07).